We begin with the raw amino-acid sequence, 379 residues long: Cobalt-precorrin-5B C(1)-methyltransferase (379 aa).

The protein belongs to the CbiD family.

The enzyme catalyses Co-precorrin-5B + S-adenosyl-L-methionine = Co-precorrin-6A + S-adenosyl-L-homocysteine. The protein operates within cofactor biosynthesis; adenosylcobalamin biosynthesis; cob(II)yrinate a,c-diamide from sirohydrochlorin (anaerobic route): step 6/10. Catalyzes the methylation of C-1 in cobalt-precorrin-5B to form cobalt-precorrin-6A. The polypeptide is Cobalt-precorrin-5B C(1)-methyltransferase (Salmonella typhimurium (strain LT2 / SGSC1412 / ATCC 700720)).